A 307-amino-acid polypeptide reads, in one-letter code: Cytochrome c1 1, heme protein, mitochondrial (307 aa).

The transit peptide at 1–64 (MVGGGVIQQI…LLSFSTVASA (64 aa)) directs the protein to the mitochondrion. The Mitochondrial intermembrane segment spans residues 65-270 (DEAEHGLESP…EPEMEERKLM (206 aa)). The Cytochrome c domain maps to 90–246 (ASIRRGHQVY…YEDGVPATEA (157 aa)). 4 residues coordinate heme c: cysteine 103, cysteine 106, histidine 107, and methionine 226. The helical transmembrane segment at 271 to 288 (GFKWIFLLSLALLQAAYY) threads the bilayer. Topologically, residues 289–307 (RRLKWSVLKSRKLVLDVVN) are mitochondrial matrix.

This sequence belongs to the cytochrome c family. As to quaternary structure, component of the ubiquinol-cytochrome c oxidoreductase (cytochrome b-c1 complex, complex III, CIII), a multisubunit enzyme composed of 10 subunits. The complex is composed of 3 respiratory subunits cytochrome b (MT-CYB), cytochrome c1 (CYC1-1 or CYC1-2) and Rieske protein (UCR1-1 or UCR1-2), 2 core protein subunits MPPalpha1 (or MPPalpha2) and MPPB, and 5 low-molecular weight protein subunits QCR7-1 (or QCR7-2), UCRQ-1 (or UCRQ-2), QCR9, UCRY and probably QCR6-1 (or QCR6-2). The complex exists as an obligatory dimer and forms supercomplexes (SCs) in the inner mitochondrial membrane with NADH-ubiquinone oxidoreductase (complex I, CI), resulting in different assemblies (supercomplexes SCI(1)III(2) and SCI(2)III(4)). Post-translationally, binds 1 heme c group covalently per subunit.

Its subcellular location is the mitochondrion inner membrane. In terms of biological role, component of the ubiquinol-cytochrome c oxidoreductase, a multisubunit transmembrane complex that is part of the mitochondrial electron transport chain which drives oxidative phosphorylation. The respiratory chain contains 3 multisubunit complexes succinate dehydrogenase (complex II, CII), ubiquinol-cytochrome c oxidoreductase (cytochrome b-c1 complex, complex III, CIII) and cytochrome c oxidase (complex IV, CIV), that cooperate to transfer electrons derived from NADH and succinate to molecular oxygen, creating an electrochemical gradient over the inner membrane that drives transmembrane transport and the ATP synthase. The cytochrome b-c1 complex catalyzes electron transfer from ubiquinol to cytochrome c, linking this redox reaction to translocation of protons across the mitochondrial inner membrane, with protons being carried across the membrane as hydrogens on the quinol. In the process called Q cycle, 2 protons are consumed from the matrix, 4 protons are released into the intermembrane space and 2 electrons are passed to cytochrome c. Cytochrome c1 is a catalytic core subunit containing a c-type heme. It transfers electrons from the [2Fe-2S] iron-sulfur cluster of the Rieske protein to cytochrome c. The protein is Cytochrome c1 1, heme protein, mitochondrial (CYC1-1) of Arabidopsis thaliana (Mouse-ear cress).